The following is a 314-amino-acid chain: Polyadenylate-binding protein-interacting protein 8 (314 aa).

A disordered region spans residues 1-47 (MAAITEMATDSNDVINDGGTGDGIEKSTDSKPEIESDDLKPKSKPEY). Residues 23–47 (GIEKSTDSKPEIESDDLKPKSKPEY) are compositionally biased toward basic and acidic residues. Positions 59-69 (KLNPEAKEFFP) match the PAM2-like motif. A Bipartite nuclear localization signal motif is present at residues 99–112 (RRRRNNYNQGRRVR). 2 consecutive RRM domains span residues 128 to 203 (RTVY…PSKT) and 225 to 301 (RTIY…PSKT).

As to quaternary structure, interacts with MPC. In terms of tissue distribution, expressed in cauline leaves, stems, rosette leaves, immature siliques and primary inflorescences but at a low level.

It is found in the nucleus. The chain is Polyadenylate-binding protein-interacting protein 8 (CID8) from Arabidopsis thaliana (Mouse-ear cress).